The chain runs to 241 residues: Putative inactive serine protease 58 (241 aa).

Positions 1–17 are cleaved as a signal peptide; it reads MKLAFLCILSTLLRTFA. The 222-residue stretch at 18-239 folds into the Peptidase S1 domain; it reads YNPDHIAGTT…YLPWIEDTMK (222 aa). A disulfide bridge connects residues Cys41 and Cys57. Catalysis depends on charge relay system residues His56 and Asp101. 3 disulfides stabilise this stretch: Cys133–Cys201, Cys165–Cys180, and Cys191–Cys215. Asn156 carries an N-linked (GlcNAc...) asparagine glycan.

It belongs to the peptidase S1 family.

It localises to the secreted. It catalyses the reaction Preferential cleavage: Arg-|-Xaa, Lys-|-Xaa.. This chain is Putative inactive serine protease 58 (Prss58), found in Mus musculus (Mouse).